The primary structure comprises 437 residues: O-methyltransferase elcB (437 aa).

S-adenosyl-L-methionine is bound at residue aspartate 269. Residue histidine 319 is the Proton acceptor of the active site.

This sequence belongs to the class I-like SAM-binding methyltransferase superfamily. Cation-independent O-methyltransferase family. COMT subfamily.

Its pathway is secondary metabolite biosynthesis. O-methyltransferase; part of the gene cluster that mediates the biosynthesis of elsinochrome C, a perelyenequinone phytotoxin structurally similar to cercosporin. The first step of elsinochrome C biosynthesis is performed by the polyketide synthase elcA which catalyzes the formation of nor-toralactone. The starter unit acyltransferase (SAT) domain of elcA initiates polyketide extension by the selective utilization of acetyl-CoA, which is elongated to the heptaketide in the beta-ketoacyl synthase (KS) domain by successive condensations with six malonyl units introduced by the malonyl acyltransferase (MAT) domain. The product template (PT) domain catalyzes C4-C9 and C2-C11 aldol cyclizations and dehydrations to a trihydroxynaphthalene, which is thought to be delivered to the thioesterase (TE) domain for product release. The bifunctional enzyme elcB then methylates nor-toralactone to toralactone before conducting an unusual oxidative aromatic ring opening. The next step in perylenequinone biosynthesis is an O-methylation at the nascent OH-6 of the elcB product performed by the O-methyltransferase elcD. The oxidative coupling of the two monomeric naphthol units in perylenequinone biosynthesis is catalyzed by the FAD-dependent monooxygenase elcE and the multicopper oxidase elcG. ElcG might catalyze the first intermolecular coupling in a regio- and stereo-selective manner via a phenol radical coupling mechanism and the elcE could forge the second C-C bond intramolecularly via a hydride transfer mechanism. The fasciclin domain-containing protein elcF might also play a role duting this step. The last piece of the puzzle in the biosynthesis of elsinochrome C is the additional annulation by enolate coupling to afford the dihydrobenzo(ghi)perylenequinone system, catalyzed by the FAD-dependent monooxygenase elcH. This is O-methyltransferase elcB from Phaeosphaeria nodorum (strain SN15 / ATCC MYA-4574 / FGSC 10173) (Glume blotch fungus).